Here is a 205-residue protein sequence, read N- to C-terminus: MSIKYVASSTLPTPWGVFDMHGFEDTETGKEHVALTFGVLDAETPTLGRIHSECLTGDALFSLRCDCGFQLQTAMQNIAEAGQGFILYLRQEGRGIGLLNKIRAYELQDQGANTVEANEKLGFAADMRKYDMILPMMEKIGIKQVSLMTNNPRKVKAMQELGIEVVQRIPLQVGKNRYNEAYLKTKSTELGHMMSEHHFSTDGES.

49 to 53 (RIHSE) lines the GTP pocket. Zn(2+)-binding residues include Cys-54, Cys-65, and Cys-67. GTP is bound by residues Gln-70, 92–94 (EGR), and Thr-114. Asp-126 serves as the catalytic Proton acceptor. The active-site Nucleophile is Arg-128. The GTP site is built by Thr-149 and Lys-154.

Belongs to the GTP cyclohydrolase II family. It depends on Zn(2+) as a cofactor.

It catalyses the reaction GTP + 4 H2O = 2,5-diamino-6-hydroxy-4-(5-phosphoribosylamino)-pyrimidine + formate + 2 phosphate + 3 H(+). It functions in the pathway cofactor biosynthesis; riboflavin biosynthesis; 5-amino-6-(D-ribitylamino)uracil from GTP: step 1/4. Catalyzes the conversion of GTP to 2,5-diamino-6-ribosylamino-4(3H)-pyrimidinone 5'-phosphate (DARP), formate and pyrophosphate. The chain is GTP cyclohydrolase-2 from Shewanella woodyi (strain ATCC 51908 / MS32).